The primary structure comprises 518 residues: D-aminopeptidase (518 aa).

Ser-62 serves as the catalytic Nucleophile. Lys-65 functions as the Proton donor/acceptor in the catalytic mechanism. The segment at 477 to 487 (QRSMDAPSPGE) is important for specificity. Position 481 (Asp-481) interacts with substrate.

It belongs to the peptidase S12 family. Homodimer.

The enzyme catalyses Release of an N-terminal D-amino acid from a peptide, Xaa-|-Yaa-, in which Xaa is preferably D-Ala, D-Ser or D-Thr. D-amino acid amides and methyl esters also are hydrolyzed, as is glycine amide.. Inhibited by beta-lactam compounds such as 6-aminopenicillic acid, 7-aminocephalosporanic acid, benzylpenicillin and ampicillin. Inhibited by p-chloromercuribenzoate. Functionally, hydrolyzes N-terminal residues in D-amino acid-containing peptides. This is D-aminopeptidase from Brucella abortus (strain S19).